The sequence spans 430 residues: UDP-N-acetylmuramoylalanine--D-glutamate ligase (430 aa).

105–111 (GSNGKTT) is an ATP binding site.

This sequence belongs to the MurCDEF family.

Its subcellular location is the cytoplasm. The enzyme catalyses UDP-N-acetyl-alpha-D-muramoyl-L-alanine + D-glutamate + ATP = UDP-N-acetyl-alpha-D-muramoyl-L-alanyl-D-glutamate + ADP + phosphate + H(+). The protein operates within cell wall biogenesis; peptidoglycan biosynthesis. In terms of biological role, cell wall formation. Catalyzes the addition of glutamate to the nucleotide precursor UDP-N-acetylmuramoyl-L-alanine (UMA). In Pseudothermotoga lettingae (strain ATCC BAA-301 / DSM 14385 / NBRC 107922 / TMO) (Thermotoga lettingae), this protein is UDP-N-acetylmuramoylalanine--D-glutamate ligase.